We begin with the raw amino-acid sequence, 812 residues long: Protein let-653 (812 aa).

A signal peptide spans methionine 1–alanine 21. Apple domains are found at residues cysteine 26 to cysteine 116 and cysteine 123 to cysteine 209. 6 disulfide bridges follow: cysteine 26/cysteine 116, cysteine 53/cysteine 88, cysteine 57/cysteine 72, cysteine 123/cysteine 209, cysteine 154/cysteine 178, and cysteine 158/cysteine 166. Asparagine 172, asparagine 211, and asparagine 272 each carry an N-linked (GlcNAc...) asparagine glycan. The ZP domain occupies glutamate 221 to aspartate 725. Low complexity-rich tracts occupy residues glutamine 375–threonine 449 and proline 496–serine 584. 2 disordered regions span residues glutamine 375–methionine 461 and aspartate 494–serine 584. The N-linked (GlcNAc...) asparagine glycan is linked to asparagine 771.

Cleaved at the C-terminal domain. In terms of tissue distribution, expressed in external cuticle-producing epithelial cells including the epidermis, vulva, rectum, excretory duct and excretory pore.

It localises to the apical cell membrane. The protein resides in the secreted. Its subcellular location is the extracellular space. Functionally, required for epithelial tube development and shaping. Involved in the morphogenesis and function of the three unicellular tubes of the excretory system, the canal cell, the duct cell and the pore cell. Also plays a role in cuticle development, alae formation and shaping of the vulval lumen. Required for larval development. In Caenorhabditis elegans, this protein is Protein let-653.